Consider the following 225-residue polypeptide: Cytidylate kinase (225 aa).

11–19 (GPAAAGKST) is a binding site for ATP.

It belongs to the cytidylate kinase family. Type 1 subfamily.

It localises to the cytoplasm. It carries out the reaction CMP + ATP = CDP + ADP. It catalyses the reaction dCMP + ATP = dCDP + ADP. The protein is Cytidylate kinase of Bacillus cereus (strain ATCC 10987 / NRS 248).